The sequence spans 221 residues: Epididymal secretory glutathione peroxidase (221 aa).

The N-terminal stretch at 1–21 (MTTQLRVVHLLPLLLACFVQT) is a signal peptide. Residue cysteine 73 is part of the active site.

It belongs to the glutathione peroxidase family. As to expression, epididymis.

Its subcellular location is the secreted. The enzyme catalyses 2 glutathione + H2O2 = glutathione disulfide + 2 H2O. Protects cells and enzymes from oxidative damage, by catalyzing the reduction of hydrogen peroxide, lipid peroxides and organic hydroperoxide, by glutathione. May constitute a glutathione peroxidase-like protective system against peroxide damage in sperm membrane lipids. The polypeptide is Epididymal secretory glutathione peroxidase (GPX5) (Macaca fascicularis (Crab-eating macaque)).